The sequence spans 795 residues: Phenylalanine--tRNA ligase beta subunit (795 aa).

The tRNA-binding domain maps to 39-148 (AGSFHGVVVG…ADAPIGTDIR (110 aa)). Residues 401 to 476 (PKRATITLRR…RVYGYNNIPD (76 aa)) form the B5 domain. D454, D460, E463, and E464 together coordinate Mg(2+). In terms of domain architecture, FDX-ACB spans 701–794 (SRFPANRRDI…LKERFQASLR (94 aa)).

The protein belongs to the phenylalanyl-tRNA synthetase beta subunit family. Type 1 subfamily. As to quaternary structure, tetramer of two alpha and two beta subunits. Requires Mg(2+) as cofactor.

It localises to the cytoplasm. It carries out the reaction tRNA(Phe) + L-phenylalanine + ATP = L-phenylalanyl-tRNA(Phe) + AMP + diphosphate + H(+). This is Phenylalanine--tRNA ligase beta subunit from Shigella boydii serotype 4 (strain Sb227).